A 332-amino-acid chain; its full sequence is Glyceraldehyde-3-phosphate dehydrogenase (332 aa).

NAD(+) is bound by residues 10–11, D36, K81, and S116; that span reads RI. D-glyceraldehyde 3-phosphate contacts are provided by residues 150–152, T181, R197, 210–211, and R233; these read SCT and TK. C151 (nucleophile) is an active-site residue. N314 serves as a coordination point for NAD(+).

The protein belongs to the glyceraldehyde-3-phosphate dehydrogenase family. As to quaternary structure, homotetramer.

It localises to the cytoplasm. It catalyses the reaction D-glyceraldehyde 3-phosphate + phosphate + NAD(+) = (2R)-3-phospho-glyceroyl phosphate + NADH + H(+). It functions in the pathway carbohydrate degradation; glycolysis; pyruvate from D-glyceraldehyde 3-phosphate: step 1/5. Its function is as follows. Catalyzes the oxidative phosphorylation of glyceraldehyde 3-phosphate (G3P) to 1,3-bisphosphoglycerate (BPG) using the cofactor NAD. The first reaction step involves the formation of a hemiacetal intermediate between G3P and a cysteine residue, and this hemiacetal intermediate is then oxidized to a thioester, with concomitant reduction of NAD to NADH. The reduced NADH is then exchanged with the second NAD, and the thioester is attacked by a nucleophilic inorganic phosphate to produce BPG. This Helicobacter pylori (strain J99 / ATCC 700824) (Campylobacter pylori J99) protein is Glyceraldehyde-3-phosphate dehydrogenase (gapA).